The following is a 563-amino-acid chain: Endoglucanase B (563 aa).

Positions 1–27 (MKKFLVLLIALIMIATLLVVPGVQTSA) form a signal peptide, or 31. Glutamate 204 (proton donor) is an active-site residue. Residue glutamate 363 is the Nucleophile of the active site. Residues 476-495 (SVTPSPSATPSPTTITAPPT) are disordered. The Dockerin domain maps to 496 to 562 (DTVTYGDVNG…VLRSISELPY (67 aa)).

The protein belongs to the glycosyl hydrolase 5 (cellulase A) family.

It carries out the reaction Endohydrolysis of (1-&gt;4)-beta-D-glucosidic linkages in cellulose, lichenin and cereal beta-D-glucans.. This enzyme catalyzes the endohydrolysis of 1,4-beta-glucosidic linkages in cellulose, lichenin and cereal beta-D-glucans. The protein is Endoglucanase B (celB) of Acetivibrio thermocellus (strain ATCC 27405 / DSM 1237 / JCM 9322 / NBRC 103400 / NCIMB 10682 / NRRL B-4536 / VPI 7372) (Clostridium thermocellum).